A 262-amino-acid chain; its full sequence is Dimeric xanthone biosynthesis cluster protein R11 (262 aa).

The segment at 69–160 (IADLLFYTKT…PQLFKHLNDE (92 aa)) is hemerythrin-like.

The protein operates within secondary metabolite biosynthesis. Part of the gene cluster that mediates the biosynthesis of the dimeric xanthones cryptosporioptides. The pathway begins with the synthesis of atrochrysone thioester by the polyketide synthase dmx-nrPKS. The atrochrysone carboxyl ACP thioesterase dmxR1 then breaks the thioester bond and releases the atrochrysone carboxylic acid from dmx-nrPKS. Atrochrysone carboxylic acid is decarboxylated by the decarboxylase dmxR15, and oxidized by the anthrone oxygenase dmxR16 to yield emodin. Emodin is then reduced to emodin hydroquinone by the oxidoreductase dmxR7. A-ring reduction by the short chain dehydrogenase dmxR18, dehydration by the scytalone dehydratase-like protein dmxR17 and probable spontaneous re-oxidation, results in overall deoxygenation to chrysophanol. Baeyer-Villiger oxidation by the Baeyer-Villiger monooxygenase (BVMO) dmxR6 then yields monodictylactone in equilibrium with monodictyphenone. In the case of the cryptosporioptides biosynthesis, monodictylactone is reduced at C-12 to an alcohol (by the short chain dehydrogenases dmxR12 or dmxR8) and hydroxylated at C-5 by dmxR9, yielding the electron-rich aromatic which could eliminate H(2)O to form the ortho-quinonemethide, followed by tautomerisation to paraquinone and complete the formal reduction to produce the 10-methylgroup. Conjugate addition of C-4a-OH to the resulting paraquinone by the monooxygenase dmxR10 then gives cyclohexadienone, which is then reduced at C-5 by the short chain dehydrogenase dmxR3 to give the dihydroxanthone. The 6,7-epoxide in the cryptosporioptides could be introduced by the cytochrome P450 monooxygenase dmxL3. The highly reducing PKS dmxL2 manufactures butyrate, which is further carboxylated by dmxL1 to form ethylmalonate. It is not yet clear whether the carboxylation occurs while the butyrate is attached to the ACP of dmxL2, but this unusual fungal metabolite could then be esterified to O-5 by the O-acetyltransferase dmxR13. Finally, dimerization performed by dmxR5 gives the observed dimers cryptosporioptides A, B and C as the final products of the pathway. This is Dimeric xanthone biosynthesis cluster protein R11 from Cryptosporiopsis sp. (strain 8999).